The primary structure comprises 437 residues: Transmembrane protein with metallophosphoesterase domain (437 aa).

Helical transmembrane passes span 7 to 27 (LSAEGKVGIASGVVFFSMLIS), 41 to 61 (ALLFRVQFLLFINSLLLLGSL), 87 to 107 (IIVLLFLALVHGSYLCMFFLV), 116 to 136 (LLSFSCLGVYVILLFFLFVFG), and 164 to 184 (VLALIITAVLAVYGLVNAAQP). Positions 211, 213, 243, 274, 376, and 378 each coordinate a divalent metal cation.

Belongs to the metallophosphoesterase superfamily. LOC643853 family. A divalent metal cation serves as cofactor.

The protein localises to the membrane. This is Transmembrane protein with metallophosphoesterase domain (tmppe) from Danio rerio (Zebrafish).